Consider the following 432-residue polypeptide: Tubulin-specific chaperone cofactor E-like protein (432 aa).

LRR repeat units lie at residues 69–94 (ASHV…ILKN), 95–117 (LPHL…HELP), 118–140 (VSTL…QSFL), 143–167 (LPKV…EPIS), 168–191 (TTVR…NVVK), 193–217 (FPNV…HFEQ), and 218–242 (LPFW…QLNR). An LRRCT region spans residues 254-295 (IPLLDALTNEERLHLIIGRLHHLRVLNGSKISSEQREQSERF). The tract at residues 324 to 415 (VTIDLTPKKE…GDSFLVQEKI (92 aa)) is ubiquitin-like (UBL).

It localises to the cytoplasm. The protein localises to the cytoskeleton. Its function is as follows. Acts as a regulator of tubulin stability. Involved in microtubule-dependent neuronal function. May be involved in tubulin acetylation/deacetylation pathway. This is Tubulin-specific chaperone cofactor E-like protein from Caenorhabditis elegans.